A 260-amino-acid polypeptide reads, in one-letter code: MNNLNDPPNWNIRPNSRADGGDGSRWNYALLVPMLGLAAFRWIWSRESQKEVEKEREAYRRRTAAFQQDLEAKYHAMISENRRAVAQLSLELEKEQNRTASYREALISQGRKLVEEKKLLEQERAQVMQEKRQVQPLRSAYLSCLQREENWQRRARLLLKEFEAVLTERQNIYCSLFLPRSKRLEIEKSLLVRASVDPVAADLEMAAGLTDIFQHDTYCGDVWNTNKRQNGRLMWLYLKYWELVVELKKFKRVEEAILEK.

Residues 49–135 (QKEVEKEREA…QVMQEKRQVQ (87 aa)) adopt a coiled-coil conformation.

This chain is Coiled-coil domain-containing protein 127 (CCDC127), found in Homo sapiens (Human).